The chain runs to 215 residues: Mite allergen Der p 7 (215 aa).

A signal peptide spans Met-1–Ala-17. Residue Asn-151 is glycosylated (N-linked (GlcNAc...) asparagine).

The protein belongs to the mite group 7 allergen family.

It is found in the secreted. The chain is Mite allergen Der p 7 (DERP7) from Dermatophagoides pteronyssinus (European house dust mite).